A 533-amino-acid chain; its full sequence is Adenylate kinase 7 (533 aa).

An adenylate kinase region spans residues 177–426 (PVKICILGPP…EPRNYGLTDE (250 aa)). Residue 187–192 (AVGKSS) coordinates ATP. Residues 207 to 265 (QLKDVISEAIAKLETIVAPKDIGEGKEEVEEEEEEENVEDAQELLDGIKESMEQNAGQL) are NMP. Residues 242-265 (ENVE…AGQL), 292-295 (GFPK), and glutamine 299 each bind AMP. The tract at residues 347 to 357 (NLPERIVAGTH) is LID. Residue arginine 365 participates in AMP binding. Glycine 397 contributes to the ATP binding site. Residues 419–487 (RNYGLTDEEK…EERELLEAQS (69 aa)) are a coiled coil. A DPY-30 region spans residues 489–533 (PLRNYLMTYVMPTLIQGLNECCNVRPEDPVDFLAEYLFKNNPEAQ).

The protein in the central section; belongs to the adenylate kinase family. In the C-terminal section; belongs to the dpy-30 family.

It localises to the cytoplasm. Its subcellular location is the cytosol. The protein localises to the cell projection. The protein resides in the cilium. It is found in the flagellum. It carries out the reaction AMP + ATP = 2 ADP. The catalysed reaction is a 2'-deoxyribonucleoside 5'-diphosphate + ATP = a 2'-deoxyribonucleoside 5'-triphosphate + ADP. It catalyses the reaction a ribonucleoside 5'-diphosphate + ATP = a ribonucleoside 5'-triphosphate + ADP. Functionally, nucleoside monophosphate (NMP) kinase that catalyzes the reversible transfer of the terminal phosphate group between nucleoside triphosphates and monophosphates. Has highest activity toward AMP, and weaker activity toward dAMP, CMP and dCMP. Also displays broad nucleoside diphosphate kinase activity. Involved in maintaining ciliary structure and function. The chain is Adenylate kinase 7 (AK7) from Macaca fascicularis (Crab-eating macaque).